A 243-amino-acid chain; its full sequence is Phosphoribosyl isomerase A (243 aa).

Residue Asp-9 is the Proton acceptor of the active site. The active-site Proton donor is the Asp-128.

Belongs to the HisA/HisF family.

It localises to the cytoplasm. The enzyme catalyses 1-(5-phospho-beta-D-ribosyl)-5-[(5-phospho-beta-D-ribosylamino)methylideneamino]imidazole-4-carboxamide = 5-[(5-phospho-1-deoxy-D-ribulos-1-ylimino)methylamino]-1-(5-phospho-beta-D-ribosyl)imidazole-4-carboxamide. It catalyses the reaction N-(5-phospho-beta-D-ribosyl)anthranilate = 1-(2-carboxyphenylamino)-1-deoxy-D-ribulose 5-phosphate. The protein operates within amino-acid biosynthesis; L-histidine biosynthesis; L-histidine from 5-phospho-alpha-D-ribose 1-diphosphate: step 4/9. It participates in amino-acid biosynthesis; L-tryptophan biosynthesis; L-tryptophan from chorismate: step 3/5. Functionally, involved in both the histidine and tryptophan biosynthetic pathways. The protein is Phosphoribosyl isomerase A of Mycobacterium avium (strain 104).